The primary structure comprises 715 residues: Polyribonucleotide nucleotidyltransferase (715 aa).

Mg(2+) contacts are provided by Asp493 and Asp499. The KH domain maps to 560–619 (PRMITIKINPEKIRDVIGKGGSVIRALTEETGTTIDISDDGVVTIASTNSDGMAEAKKRI). One can recognise an S1 motif domain in the interval 629–697 (GQVYEGTVLK…EKGRVRLSAK (69 aa)).

Belongs to the polyribonucleotide nucleotidyltransferase family. The cofactor is Mg(2+).

Its subcellular location is the cytoplasm. It catalyses the reaction RNA(n+1) + phosphate = RNA(n) + a ribonucleoside 5'-diphosphate. Its function is as follows. Involved in mRNA degradation. Catalyzes the phosphorolysis of single-stranded polyribonucleotides processively in the 3'- to 5'-direction. The sequence is that of Polyribonucleotide nucleotidyltransferase from Burkholderia lata (strain ATCC 17760 / DSM 23089 / LMG 22485 / NCIMB 9086 / R18194 / 383).